We begin with the raw amino-acid sequence, 812 residues long: Hyaluronate lyase HylB (812 aa).

The tat-type signal signal peptide spans 1 to 32; sequence MFGTPSRRTFLTASALSAMALAASPTVTDAIA. Residues Asn222, His272, and Tyr281 contribute to the active site.

It belongs to the polysaccharide lyase 8 family. Post-translationally, predicted to be exported by the Tat system. The position of the signal peptide cleavage has been experimentally proven.

It is found in the secreted. It catalyses the reaction [hyaluronan](n) = n 3-(4-deoxy-beta-D-gluc-4-enuronosyl)-N-acetyl-D-glucosamine + H2O. In terms of biological role, degrades hyaluronic acid (HA) exclusively into HA disaccharides (HA-2). Produced HA-2s confer anti-inflammatory properties leading to reduced immunopathology in the mouse model of acne. The polypeptide is Hyaluronate lyase HylB (Cutibacterium acnes (Propionibacterium acnes)).